Consider the following 381-residue polypeptide: Neuropeptide Y receptor type 2 (381 aa).

The disordered stretch occupies residues 1–35 (MGPIGAEADENQTVEEMKVEQYGPQTTPRGELVPD). Over 1–51 (MGPIGAEADENQTVEEMKVEQYGPQTTPRGELVPDPEPELIDSTKLIEVQV) the chain is Extracellular. An N-linked (GlcNAc...) asparagine glycan is attached at Asn11. Residues 52–72 (VLILAYCSIILLGVIGNSLVI) form a helical membrane-spanning segment. Topologically, residues 73–86 (HVVIKFKSMRTVTN) are cytoplasmic. A helical membrane pass occupies residues 87–107 (FFIANLAVADLLVNTLCLPFT). Over 108–124 (LTYTLMGEWKMGPVLCH) the chain is Extracellular. The cysteines at positions 123 and 203 are disulfide-linked. A helical transmembrane segment spans residues 125–145 (LVPYAQGLAVQVSTITLTVIA). The Cytoplasmic segment spans residues 146–165 (LDRHRCIVYHLESKISKRIS). Residues 166-186 (FLIIGLAWGISALLASPLAIF) traverse the membrane as a helical segment. Residues 187–216 (REYSLIEIIPDFEIVACTEKWPGEEKSIYG) are Extracellular-facing. A helical transmembrane segment spans residues 217–237 (TVYSLSSLLILYVLPLGIISF). The Cytoplasmic portion of the chain corresponds to 238–268 (SYTRIWSKLKNHVSPGAANDHYHQRRQKTTK). The helical transmembrane segment at 269-289 (MLVCVVVVFAVSWLPLHAFQL) threads the bilayer. At 290 to 304 (AVDIDSQVLDLKEYK) the chain is on the extracellular side. A helical transmembrane segment spans residues 305-325 (LIFTVFHIIAMCSTFANPLLY). Residues 326–381 (GWMNSNYRKAFLSAFRCEQRLDAIHSEVSVTFKAKKNLEVRKNSGPNDSFTEATNV) lie on the Cytoplasmic side of the membrane. Cys342 carries the S-palmitoyl cysteine lipid modification.

It belongs to the G-protein coupled receptor 1 family. High levels in amygdala, corpus callosum, hippocampus and subthalamic nucleus. Also detectable in caudate nucleus, hypothalamus and substantia nigra.

It localises to the cell membrane. Functionally, receptor for neuropeptide Y and peptide YY. The rank order of affinity of this receptor for pancreatic polypeptides is PYY &gt; NPY &gt; PYY (3-36) &gt; NPY (2-36) &gt; [Ile-31, Gln-34] PP &gt; [Leu-31, Pro-34] NPY &gt; PP, [Pro-34] PYY and NPY free acid. The protein is Neuropeptide Y receptor type 2 (NPY2R) of Homo sapiens (Human).